The following is a 453-amino-acid chain: tRNA(Ile)-lysidine synthase (453 aa).

Residue 27–32 (SGGSDS) participates in ATP binding.

This sequence belongs to the tRNA(Ile)-lysidine synthase family.

Its subcellular location is the cytoplasm. It catalyses the reaction cytidine(34) in tRNA(Ile2) + L-lysine + ATP = lysidine(34) in tRNA(Ile2) + AMP + diphosphate + H(+). Its function is as follows. Ligates lysine onto the cytidine present at position 34 of the AUA codon-specific tRNA(Ile) that contains the anticodon CAU, in an ATP-dependent manner. Cytidine is converted to lysidine, thus changing the amino acid specificity of the tRNA from methionine to isoleucine. The chain is tRNA(Ile)-lysidine synthase from Rhizobium meliloti (strain 1021) (Ensifer meliloti).